The chain runs to 86 residues: Electron transfer flavoprotein regulatory factor 1 (86 aa).

Belongs to the complex I LYR family. Homotetramer. Interacts with NDUFAB1. Interacts with ETFA. Interacts with ETFB.

It is found in the mitochondrion. In terms of biological role, acts as a regulator of the electron transfer flavoprotein by promoting the removal of flavin from the ETF holoenzyme (composed of ETFA and ETFB). This is Electron transfer flavoprotein regulatory factor 1 from Mus musculus (Mouse).